We begin with the raw amino-acid sequence, 136 residues long: Large-conductance mechanosensitive channel (136 aa).

2 helical membrane passes run 9-29 (AFAS…GAAF) and 79-99 (IQTV…LKAI).

The protein belongs to the MscL family. In terms of assembly, homopentamer.

The protein localises to the cell inner membrane. Channel that opens in response to stretch forces in the membrane lipid bilayer. May participate in the regulation of osmotic pressure changes within the cell. In Shewanella putrefaciens (strain CN-32 / ATCC BAA-453), this protein is Large-conductance mechanosensitive channel.